Consider the following 308-residue polypeptide: Paired box protein 3 homolog (308 aa).

Positions 13-140 (GQGRVNQLGG…PAIKRLIGNK (128 aa)) form a DNA-binding region, paired. The segment at 16–72 (RVNQLGGVFINGRPLPIHVRHAIISMAKKGIKPCHISRQLKVSHGAVSKILNRYAET) is PAI subdomain. The interval 92–140 (AVEKEILIACDENPQMSAAELRDWLIHKDICTKGNAPTVPAIKRLIGNK) is RED subdomain. The disordered stretch occupies residues 168–191 (CSKSSSDDEEGSSPSNDASSRRNR). The homeobox DNA-binding region spans 187 to 246 (SRRNRTSFTAEQLDVLENAFRADTYPHANARESISKETGLSEEKIMTWFSNRRARCRKNM).

Belongs to the paired homeobox family.

The protein localises to the nucleus. Its function is as follows. Transcriptional activator. Regulates the lateral/ventral epidermal cell fate decision. The polypeptide is Paired box protein 3 homolog (Caenorhabditis elegans).